A 317-amino-acid chain; its full sequence is Ret finger protein-like 1 (317 aa).

The RING-type zinc finger occupies 40-82 (CPVCSDYLEKPMSLECGCAVCFKCINSLQKEPHGEDLLCCCCS). The B30.2/SPRY domain maps to 107–301 (EPKLKKILQM…DKSVLSICPV (195 aa)).

Phosphorylated by PKC and CDK1. The antiproliferative effect seems to be positively regulated by PKC phosphorylation and negatively by CDK1 phosphorylation. Seems to be expressed in prostate and less abundantly in adult brain, fetal liver, and fetal kidney.

Its subcellular location is the cytoplasm. It localises to the nucleus. Its function is as follows. Negatively regulates the G2-M phase transition, possibly by promoting cyclin B1/CCNB1 and CDK1 proteasomal degradation and thereby preventing their accumulation during interphase. This is Ret finger protein-like 1 (RFPL1) from Homo sapiens (Human).